The sequence spans 328 residues: DNA-directed RNA polymerase subunit alpha (328 aa).

The tract at residues 1–231 (MQTNLLKPKA…EQLAVFAQLE (231 aa)) is alpha N-terminal domain (alpha-NTD). Residues 248–328 (FDPILLRPVD…NWPPQGLDKR (81 aa)) form an alpha C-terminal domain (alpha-CTD) region.

The protein belongs to the RNA polymerase alpha chain family. In terms of assembly, homodimer. The RNAP catalytic core consists of 2 alpha, 1 beta, 1 beta' and 1 omega subunit. When a sigma factor is associated with the core the holoenzyme is formed, which can initiate transcription.

It carries out the reaction RNA(n) + a ribonucleoside 5'-triphosphate = RNA(n+1) + diphosphate. DNA-dependent RNA polymerase catalyzes the transcription of DNA into RNA using the four ribonucleoside triphosphates as substrates. The sequence is that of DNA-directed RNA polymerase subunit alpha from Leptothrix cholodnii (strain ATCC 51168 / LMG 8142 / SP-6) (Leptothrix discophora (strain SP-6)).